The following is a 472-amino-acid chain: Tryptophanase (472 aa).

Lys270 is modified (N6-(pyridoxal phosphate)lysine).

Belongs to the beta-eliminating lyase family. Homotetramer. Pyridoxal 5'-phosphate serves as cofactor.

The enzyme catalyses L-tryptophan + H2O = indole + pyruvate + NH4(+). The protein operates within amino-acid degradation; L-tryptophan degradation via pyruvate pathway; indole and pyruvate from L-tryptophan: step 1/1. This chain is Tryptophanase (tnaA), found in Haemophilus influenzae.